Here is a 724-residue protein sequence, read N- to C-terminus: Long-chain-fatty-acid--CoA ligase ACSBG1 (724 aa).

Residues 1–51 form a disordered region; sequence MPRNSGAGYGCPHGDPSMLDSRETPQESRQDMTVGTTQEKLKTSSLTDRQP. Positions 20–30 are enriched in basic and acidic residues; that stretch reads DSRETPQESRQ. Residues 31 to 51 are compositionally biased toward polar residues; sequence DMTVGTTQEKLKTSSLTDRQP. Phosphoserine occurs at positions 53 and 56. ATP-binding positions include 282-290, 472-477, D550, and R565; these read TSGTTGNPK and AGYGLS. Y658 is modified (phosphotyrosine). K701 provides a ligand contact to ATP.

It belongs to the ATP-dependent AMP-binding enzyme family. Bubblegum subfamily.

The protein localises to the cytoplasm. It localises to the cytoplasmic vesicle. Its subcellular location is the microsome. The protein resides in the endoplasmic reticulum. It is found in the cell membrane. The enzyme catalyses a long-chain fatty acid + ATP + CoA = a long-chain fatty acyl-CoA + AMP + diphosphate. It catalyses the reaction (E)-hexadec-2-enoate + ATP + CoA = (2E)-hexadecenoyl-CoA + AMP + diphosphate. The catalysed reaction is hexadecanoate + ATP + CoA = hexadecanoyl-CoA + AMP + diphosphate. Its function is as follows. Catalyzes the conversion of fatty acids such as long-chain and very long-chain fatty acids to their active form acyl-CoAs for both synthesis of cellular lipids, and degradation via beta-oxidation. Can activate diverse saturated, monosaturated and polyunsaturated fatty acids. The sequence is that of Long-chain-fatty-acid--CoA ligase ACSBG1 from Macaca fascicularis (Crab-eating macaque).